The chain runs to 70 residues: DNA-directed RNA polymerase subunit omega (70 aa).

Belongs to the RNA polymerase subunit omega family. The RNAP catalytic core consists of 2 alpha, 1 beta, 1 beta' and 1 omega subunit. When a sigma factor is associated with the core the holoenzyme is formed, which can initiate transcription.

It carries out the reaction RNA(n) + a ribonucleoside 5'-triphosphate = RNA(n+1) + diphosphate. Functionally, promotes RNA polymerase assembly. Latches the N- and C-terminal regions of the beta' subunit thereby facilitating its interaction with the beta and alpha subunits. This chain is DNA-directed RNA polymerase subunit omega, found in Thermoanaerobacter pseudethanolicus (strain ATCC 33223 / 39E) (Clostridium thermohydrosulfuricum).